The chain runs to 222 residues: Beta-amylase (222 aa).

Threonine 36 provides a ligand contact to substrate. The Proton acceptor role is filled by glutamate 74. Substrate is bound by residues 75–76 (NA) and arginine 114.

It belongs to the glycosyl hydrolase 14 family.

It catalyses the reaction Hydrolysis of (1-&gt;4)-alpha-D-glucosidic linkages in polysaccharides so as to remove successive maltose units from the non-reducing ends of the chains.. This Secale cereale (Rye) protein is Beta-amylase (BMY1).